The chain runs to 26 residues: uncharacterized protein (26 aa).

Residues 3 to 23 traverse the membrane as a helical segment; that stretch reads IIYLILFLIVIYLLYRILDVL.

The protein resides in the membrane. This is an uncharacterized protein from Helicobacter pylori (strain J99 / ATCC 700824) (Campylobacter pylori J99).